The chain runs to 281 residues: Pantothenate synthetase (281 aa).

30 to 37 is a binding site for ATP; it reads MGNLHQGH. The Proton donor role is filled by His-37. Gln-61 contacts (R)-pantoate. Gln-61 is a beta-alanine binding site. 149–152 contacts ATP; the sequence is GRKD. Gln-155 contacts (R)-pantoate. Residues Ile-178 and 186–189 contribute to the ATP site; that span reads MSSR.

This sequence belongs to the pantothenate synthetase family. As to quaternary structure, homodimer.

The protein localises to the cytoplasm. The enzyme catalyses (R)-pantoate + beta-alanine + ATP = (R)-pantothenate + AMP + diphosphate + H(+). It participates in cofactor biosynthesis; (R)-pantothenate biosynthesis; (R)-pantothenate from (R)-pantoate and beta-alanine: step 1/1. Catalyzes the condensation of pantoate with beta-alanine in an ATP-dependent reaction via a pantoyl-adenylate intermediate. This is Pantothenate synthetase from Shewanella denitrificans (strain OS217 / ATCC BAA-1090 / DSM 15013).